A 266-amino-acid polypeptide reads, in one-letter code: Orotidine 5'-phosphate decarboxylase (266 aa).

Residues D38, 60 to 62 (KTH), 92 to 101 (DRKFADIGNT), Y218, and R236 each bind substrate. K94 (proton donor) is an active-site residue.

It belongs to the OMP decarboxylase family.

The catalysed reaction is orotidine 5'-phosphate + H(+) = UMP + CO2. The protein operates within pyrimidine metabolism; UMP biosynthesis via de novo pathway; UMP from orotate: step 2/2. The sequence is that of Orotidine 5'-phosphate decarboxylase (URA3) from Candida maltosa (Yeast).